The sequence spans 42 residues: Photosystem I reaction center subunit IX (42 aa).

Residues 7–27 traverse the membrane as a helical segment; it reads YLSVAPVLSTLWFGSLAGLLI.

It belongs to the PsaJ family.

It localises to the plastid. Its subcellular location is the chloroplast thylakoid membrane. Functionally, may help in the organization of the PsaE and PsaF subunits. The protein is Photosystem I reaction center subunit IX of Daucus carota (Wild carrot).